The primary structure comprises 203 residues: ATP-dependent Clp protease proteolytic subunit (203 aa).

Serine 100 serves as the catalytic Nucleophile. Residue histidine 125 is part of the active site.

It belongs to the peptidase S14 family. As to quaternary structure, fourteen ClpP subunits assemble into 2 heptameric rings which stack back to back to give a disk-like structure with a central cavity, resembling the structure of eukaryotic proteasomes.

The protein resides in the cytoplasm. The enzyme catalyses Hydrolysis of proteins to small peptides in the presence of ATP and magnesium. alpha-casein is the usual test substrate. In the absence of ATP, only oligopeptides shorter than five residues are hydrolyzed (such as succinyl-Leu-Tyr-|-NHMec, and Leu-Tyr-Leu-|-Tyr-Trp, in which cleavage of the -Tyr-|-Leu- and -Tyr-|-Trp bonds also occurs).. In terms of biological role, cleaves peptides in various proteins in a process that requires ATP hydrolysis. Has a chymotrypsin-like activity. Plays a major role in the degradation of misfolded proteins. The sequence is that of ATP-dependent Clp protease proteolytic subunit from Anaeromyxobacter sp. (strain K).